We begin with the raw amino-acid sequence, 379 residues long: UDP-4-amino-4-deoxy-L-arabinose--oxoglutarate aminotransferase (379 aa).

At lysine 182 the chain carries N6-(pyridoxal phosphate)lysine.

It belongs to the DegT/DnrJ/EryC1 family. ArnB subfamily. As to quaternary structure, homodimer. It depends on pyridoxal 5'-phosphate as a cofactor.

The catalysed reaction is UDP-4-amino-4-deoxy-beta-L-arabinose + 2-oxoglutarate = UDP-beta-L-threo-pentopyranos-4-ulose + L-glutamate. It participates in nucleotide-sugar biosynthesis; UDP-4-deoxy-4-formamido-beta-L-arabinose biosynthesis; UDP-4-deoxy-4-formamido-beta-L-arabinose from UDP-alpha-D-glucuronate: step 2/3. It functions in the pathway bacterial outer membrane biogenesis; lipopolysaccharide biosynthesis. Functionally, catalyzes the conversion of UDP-4-keto-arabinose (UDP-Ara4O) to UDP-4-amino-4-deoxy-L-arabinose (UDP-L-Ara4N). The modified arabinose is attached to lipid A and is required for resistance to polymyxin and cationic antimicrobial peptides. This chain is UDP-4-amino-4-deoxy-L-arabinose--oxoglutarate aminotransferase, found in Klebsiella pneumoniae subsp. pneumoniae (strain ATCC 700721 / MGH 78578).